Consider the following 49-residue polypeptide: Large ribosomal subunit protein bL33C (49 aa).

The tract at residues 21 to 49 (KNKRNNPDRVEFKKYCPRDKKSTLHRETK) is disordered. Over residues 25 to 49 (NNPDRVEFKKYCPRDKKSTLHRETK) the composition is skewed to basic and acidic residues.

The protein belongs to the bacterial ribosomal protein bL33 family.

This Bacillus licheniformis (strain ATCC 14580 / DSM 13 / JCM 2505 / CCUG 7422 / NBRC 12200 / NCIMB 9375 / NCTC 10341 / NRRL NRS-1264 / Gibson 46) protein is Large ribosomal subunit protein bL33C.